The sequence spans 323 residues: Ficolin-2 (323 aa).

An N-terminal signal peptide occupies residues 1–26 (MDTRGVAAAMRPLVLLVAFLCTAAPA). The region spanning 52–102 (GLPGAAGPKGEAGASGPKGGQGPPGAPGEPGPPGPKGDRGEKGEPGPKGES) is the Collagen-like domain. Positions 55–66 (GAAGPKGEAGAS) are enriched in low complexity. A disordered region spans residues 55 to 107 (GAAGPKGEAGASGPKGGQGPPGAPGEPGPPGPKGDRGEKGEPGPKGESWETEQ). Pro residues predominate over residues 75–86 (PGAPGEPGPPGP). Over residues 87-102 (KGDRGEKGEPGPKGES) the composition is skewed to basic and acidic residues. The region spanning 106-323 (EQCLTGPRTC…KVSEMKFRAT (218 aa)) is the Fibrinogen C-terminal domain. 2 disulfide bridges follow: Cys108–Cys136 and Cys115–Cys143. Asn249 is a glycosylation site (N-linked (GlcNAc...) asparagine). The Ca(2+) site is built by Asp259, Asp261, and Ser265. Residues Cys267 and Cys280 are joined by a disulfide bond. N-linked (GlcNAc...) asparagine glycans are attached at residues Asn302 and Asn310.

It belongs to the ficolin lectin family. Homotrimer. Interacts with elastin. Interacts with MASP1 and MASP2. In terms of tissue distribution, mainly expressed in skeletal muscle.

Its subcellular location is the secreted. In terms of biological role, may function in innate immunity through activation of the lectin complement pathway. Calcium-dependent and GlcNAc-binding lectin. This chain is Ficolin-2 (FCN2), found in Sus scrofa (Pig).